The following is a 406-amino-acid chain: UPF0754 membrane protein SYNPCC7002_A1087 (406 aa).

A helical transmembrane segment spans residues 384–404 (IVNLGGVLGFLVGVAQSVILL).

Belongs to the UPF0754 family.

Its subcellular location is the cell inner membrane. This is UPF0754 membrane protein SYNPCC7002_A1087 from Picosynechococcus sp. (strain ATCC 27264 / PCC 7002 / PR-6) (Agmenellum quadruplicatum).